Consider the following 363-residue polypeptide: UDP-N-acetylglucosamine--N-acetylmuramyl-(pentapeptide) pyrophosphoryl-undecaprenol N-acetylglucosamine transferase (363 aa).

UDP-N-acetyl-alpha-D-glucosamine contacts are provided by residues 16–18 (TGG), Asn128, Arg167, Ser195, Ile249, 268–273 (ALTVSE), and Gln294.

It belongs to the glycosyltransferase 28 family. MurG subfamily.

Its subcellular location is the cell inner membrane. It catalyses the reaction di-trans,octa-cis-undecaprenyl diphospho-N-acetyl-alpha-D-muramoyl-L-alanyl-D-glutamyl-meso-2,6-diaminopimeloyl-D-alanyl-D-alanine + UDP-N-acetyl-alpha-D-glucosamine = di-trans,octa-cis-undecaprenyl diphospho-[N-acetyl-alpha-D-glucosaminyl-(1-&gt;4)]-N-acetyl-alpha-D-muramoyl-L-alanyl-D-glutamyl-meso-2,6-diaminopimeloyl-D-alanyl-D-alanine + UDP + H(+). Its pathway is cell wall biogenesis; peptidoglycan biosynthesis. Functionally, cell wall formation. Catalyzes the transfer of a GlcNAc subunit on undecaprenyl-pyrophosphoryl-MurNAc-pentapeptide (lipid intermediate I) to form undecaprenyl-pyrophosphoryl-MurNAc-(pentapeptide)GlcNAc (lipid intermediate II). The chain is UDP-N-acetylglucosamine--N-acetylmuramyl-(pentapeptide) pyrophosphoryl-undecaprenol N-acetylglucosamine transferase from Marinobacter nauticus (strain ATCC 700491 / DSM 11845 / VT8) (Marinobacter aquaeolei).